Reading from the N-terminus, the 130-residue chain is Small ribosomal subunit protein uS11 (130 aa).

This sequence belongs to the universal ribosomal protein uS11 family. As to quaternary structure, part of the 30S ribosomal subunit. Interacts with proteins S7 and S18. Binds to IF-3.

Functionally, located on the platform of the 30S subunit, it bridges several disparate RNA helices of the 16S rRNA. Forms part of the Shine-Dalgarno cleft in the 70S ribosome. The polypeptide is Small ribosomal subunit protein uS11 (Synechococcus sp. (strain CC9605)).